The sequence spans 248 residues: 2,3-bisphosphoglycerate-dependent phosphoglycerate mutase (248 aa).

Substrate-binding positions include 8–15 (RHGESTWN), 21–22 (TG), Arg-60, 87–90 (ERHY), Lys-98, 114–115 (RR), and 183–184 (GN). His-9 serves as the catalytic Tele-phosphohistidine intermediate. Glu-87 acts as the Proton donor/acceptor in catalysis.

Belongs to the phosphoglycerate mutase family. BPG-dependent PGAM subfamily. As to quaternary structure, homodimer.

The enzyme catalyses (2R)-2-phosphoglycerate = (2R)-3-phosphoglycerate. It functions in the pathway carbohydrate degradation; glycolysis; pyruvate from D-glyceraldehyde 3-phosphate: step 3/5. Catalyzes the interconversion of 2-phosphoglycerate and 3-phosphoglycerate. This Burkholderia cenocepacia (strain ATCC BAA-245 / DSM 16553 / LMG 16656 / NCTC 13227 / J2315 / CF5610) (Burkholderia cepacia (strain J2315)) protein is 2,3-bisphosphoglycerate-dependent phosphoglycerate mutase.